The sequence spans 481 residues: Glutamyl-tRNA(Gln) amidotransferase subunit A (481 aa).

Residues lysine 78 and serine 153 each act as charge relay system in the active site. The active-site Acyl-ester intermediate is serine 177.

The protein belongs to the amidase family. GatA subfamily. As to quaternary structure, heterotrimer of A, B and C subunits.

The catalysed reaction is L-glutamyl-tRNA(Gln) + L-glutamine + ATP + H2O = L-glutaminyl-tRNA(Gln) + L-glutamate + ADP + phosphate + H(+). Its function is as follows. Allows the formation of correctly charged Gln-tRNA(Gln) through the transamidation of misacylated Glu-tRNA(Gln) in organisms which lack glutaminyl-tRNA synthetase. The reaction takes place in the presence of glutamine and ATP through an activated gamma-phospho-Glu-tRNA(Gln). The chain is Glutamyl-tRNA(Gln) amidotransferase subunit A from Borreliella afzelii (strain PKo) (Borrelia afzelii).